Reading from the N-terminus, the 377-residue chain is Homoserine O-acetyltransferase (377 aa).

The AB hydrolase-1 domain maps to 48 to 347 (NVVLIEHALT…PVGHDAFLTE (300 aa)). Catalysis depends on serine 143, which acts as the Nucleophile. Arginine 213 lines the substrate pocket. Active-site residues include aspartate 311 and histidine 341. Aspartate 342 contributes to the substrate binding site.

Belongs to the AB hydrolase superfamily. MetX family. As to quaternary structure, homodimer.

The protein resides in the cytoplasm. It catalyses the reaction L-homoserine + acetyl-CoA = O-acetyl-L-homoserine + CoA. Its pathway is amino-acid biosynthesis; L-methionine biosynthesis via de novo pathway; O-acetyl-L-homoserine from L-homoserine: step 1/1. Its function is as follows. Transfers an acetyl group from acetyl-CoA to L-homoserine, forming acetyl-L-homoserine. This is Homoserine O-acetyltransferase from Corynebacterium efficiens (strain DSM 44549 / YS-314 / AJ 12310 / JCM 11189 / NBRC 100395).